Here is a 246-residue protein sequence, read N- to C-terminus: 1-(5-phosphoribosyl)-5-[(5-phosphoribosylamino)methylideneamino] imidazole-4-carboxamide isomerase (246 aa).

The active-site Proton acceptor is Asp-8. Catalysis depends on Asp-130, which acts as the Proton donor.

The protein belongs to the HisA/HisF family.

It is found in the cytoplasm. The catalysed reaction is 1-(5-phospho-beta-D-ribosyl)-5-[(5-phospho-beta-D-ribosylamino)methylideneamino]imidazole-4-carboxamide = 5-[(5-phospho-1-deoxy-D-ribulos-1-ylimino)methylamino]-1-(5-phospho-beta-D-ribosyl)imidazole-4-carboxamide. It functions in the pathway amino-acid biosynthesis; L-histidine biosynthesis; L-histidine from 5-phospho-alpha-D-ribose 1-diphosphate: step 4/9. The sequence is that of 1-(5-phosphoribosyl)-5-[(5-phosphoribosylamino)methylideneamino] imidazole-4-carboxamide isomerase from Alcanivorax borkumensis (strain ATCC 700651 / DSM 11573 / NCIMB 13689 / SK2).